Here is a 235-residue protein sequence, read N- to C-terminus: MSRNVDKANSVLVRFQEQQAESAGGYKDYSRYQRPRNVSKVKSIKEANEWKRQVSKEIKQKSTRIYDPSLNEMQIAELNDELNNLFKEWKRWQWHIDHTLMEKKTKRKRLEDSHVLMNSGKLINGKRYFGRALELPEVKEWLKQSQRQNDGGSINTKCIPKDRNDFYYHGKVTAALTEFEANWTSILKAHYNVPVNEDEEEMSRQTQEIHVPTLADMEHWLVQRRKKKLMDELNL.

Belongs to the ISY1 family. As to quaternary structure, belongs to the NTC complex (or PRP19-associated complex), composed of at least CEF1, CLF1, ISY1, NTC20, SNT309, SYF1, SYF2, and PRP19. The NTC complex associates with the spliceosome after the release of the U1 and U4 snRNAs and forms the CWC spliceosome subcomplex (or CEF1-associated complex) reminiscent of a late-stage spliceosome composed also of the U2, U5 and U6 snRNAs and at least BUD13, BUD31, BRR2, CDC40, CUS1, CWC2, CWC15, CWC21, CWC22, CWC23, CWC24, CWC25, CWC27, ECM2, HSH155, IST3, LEA1, MSL1, PRP8, PRP9, PRP11, PRP21, PRP22, PRP45, PRP46, SLU7, SMB1, SMD1, SMD2, SMD3, SMX2, SMX3, SNU114, SPP2, RSE1 and YJU2. Interacts with CEF1, CWC2, CLF1, and SYF1.

The protein localises to the cytoplasm. Its subcellular location is the nucleus. In terms of biological role, involved in pre-mRNA splicing and cell cycle control. As a component of the NTC complex (or PRP19-associated complex), associates to the spliceosome to mediate conformational rearrangement or to stabilize the structure of the spliceosome after U4 snRNA dissociation, which leads to spliceosome maturation. The cell cycle arrest of SYF2 defective cells may be due to the inefficient splicing of TUB1. Also involved in DNA repair. This chain is Pre-mRNA-splicing factor ISY1 (ISY1), found in Saccharomyces cerevisiae (strain ATCC 204508 / S288c) (Baker's yeast).